A 230-amino-acid chain; its full sequence is Aspartate and serine-rich protein (230 aa).

N-linked (GlcNAc...) asparagine glycosylation is found at N17, N132, and N139. Residues 112-230 (LNGGATAGGV…DSDSNDTDSD (119 aa)) are disordered. Over residues 126–140 (DTDESSNDTDEDSND) the composition is skewed to acidic residues. The span at 141 to 161 (SDSKDTDSDSKDTDSDSKDSD) shows a compositional bias: basic and acidic residues. 2 N-linked (GlcNAc...) asparagine glycosylation sites follow: N163 and N170. A compositionally biased stretch (basic and acidic residues) spans 173–223 (DSKDTDSDSKDSDSKDTDSDSKDTDSDSKDSDSKDTDSDSKDTDSDSKDSD). The N-linked (GlcNAc...) asparagine glycan is linked to N225.

In terms of tissue distribution, component of the acid-insoluble organic matrix of calcified layers of the shell (at protein level).

It is found in the secreted. This chain is Aspartate and serine-rich protein, found in Lottia gigantea (Giant owl limpet).